A 130-amino-acid polypeptide reads, in one-letter code: MSKKVVEVKTLKVGKYVIIDGEASKITNISTSSPGKHGSAKARVEAVGIFDNQKRSFVKPVDSKVDIPIIDKRTAQVIAIMGGDVQLMDLETYETFETPIPDELSEQLVEGVEVEYIEALGQRKLMRTKG.

Lys36 is modified (hypusine).

This sequence belongs to the eIF-5A family.

Its subcellular location is the cytoplasm. Functionally, functions by promoting the formation of the first peptide bond. This Methanothermobacter thermautotrophicus (strain ATCC 29096 / DSM 1053 / JCM 10044 / NBRC 100330 / Delta H) (Methanobacterium thermoautotrophicum) protein is Translation initiation factor 5A (eif5a).